Consider the following 148-residue polypeptide: MRVFTPSHKVQSNPLWRTVGFPSSSGPHLNAILNEGLPVTIVDKIQNWSTFGKGDILRIAGIQIRSYSRRCSGKGKFTADESQRIARFVRVMDHAVDLFNGDKDKAAQWMKRPIRGLGYVTPESMLDTESGALDVMNLIGRIEHGIVS.

This sequence belongs to the MbcA/ParS/Xre antitoxin family. In terms of assembly, homodimer. Forms a complex with cognate toxin Rse.

In terms of biological role, antitoxin component of a type II toxin-antitoxin (TA) system. Neutralizes the NAD(+) depleting activity of cognate toxin Res. This chain is Antitoxin Xre, found in Photorhabdus laumondii subsp. laumondii (strain DSM 15139 / CIP 105565 / TT01) (Photorhabdus luminescens subsp. laumondii).